Here is an 88-residue protein sequence, read N- to C-terminus: Small ribosomal subunit protein bS20 (88 aa).

The protein belongs to the bacterial ribosomal protein bS20 family.

Binds directly to 16S ribosomal RNA. In Methylocella silvestris (strain DSM 15510 / CIP 108128 / LMG 27833 / NCIMB 13906 / BL2), this protein is Small ribosomal subunit protein bS20.